The sequence spans 66 residues: Beta-mammal toxin Cv3 (66 aa).

Residues 1 to 66 (KEGYIVNYYD…VWPLPNKTCN (66 aa)) form the LCN-type CS-alpha/beta domain. Disulfide bonds link cysteine 12–cysteine 65, cysteine 16–cysteine 41, cysteine 25–cysteine 46, and cysteine 29–cysteine 48.

Expressed by the venom gland.

The protein resides in the secreted. Its function is as follows. Beta toxins bind voltage-independently at site-4 of sodium channels (Nav) and reduces peak current and shifts the voltage of activation toward more negative potentials thereby affecting sodium channel activation and promoting spontaneous and repetitive firing. This toxin is strongly toxic to mice. The polypeptide is Beta-mammal toxin Cv3 (Centruroides villegasi (Scorpion)).